The sequence spans 236 residues: Transcriptional activator protein SolR (236 aa).

The region spanning 169–234 is the HTH luxR-type domain; it reads VPESNAVLTT…QAVVKAIATG (66 aa). Positions 193 to 212 form a DNA-binding region, H-T-H motif; that stretch reads AYEIGQILRISERTVNFHVN.

This sequence belongs to the autoinducer-regulated transcriptional regulatory protein family.

This chain is Transcriptional activator protein SolR (solR), found in Ralstonia solanacearum (Pseudomonas solanacearum).